The primary structure comprises 223 residues: MAGISSGLEGIRAISWNTVPILKVSLGNDQVWPAFDPVLTPVTAVGAYTYNIPAQAEFIDVILLGAGGGGQGMGSATAWGQGGFGGSWVTATLRRGVDIPWAVTQITGVIGAGGTAGPGYIFGQTGAGGKGGDTTATFSGGGTLIAAGGAGGNSRKLDFGGKSPNPADMVYRDRTYDGGARQLTPSGIGYAPGGGGAAATVPVGITGLAGGPGARGQAWFLAY.

The sequence is that of Gene 32 protein (32) from Mycobacterium phage D29 (Mycobacteriophage D29).